We begin with the raw amino-acid sequence, 206 residues long: U-scoloptoxin(08)-Cw1a (206 aa).

Residues 1-24 (MIFRVNLLFSCFCFVLFVFDFSNA) form the signal peptide. Residues 25 to 164 (SKYDQGSLNI…DLPELKRRKR (140 aa)) constitute a propeptide that is removed on maturation. The stretch at 37–43 (RLWRDWE) is one RLWRNWE 1; approximate repeat. An RLWRNWE 2; approximate repeat occupies 71–77 (RLWRDWE). The stretch at 104-110 (RLWRDWE) is one RLWRNWE 3; approximate repeat. An RLWRNWE 4 repeat occupies 137–143 (RLWRNWE). The RLWRNWE 5; approximate repeat unit spans residues 164-170 (RLWRNED).

The protein belongs to the scoloptoxin-08 family. Contains 3 disulfide bonds. In terms of tissue distribution, expressed by the venom gland.

It is found in the secreted. This Cormocephalus westwoodi (Westwood's green centipede) protein is U-scoloptoxin(08)-Cw1a.